The primary structure comprises 317 residues: Ribosomal protein L11 methyltransferase (317 aa).

S-adenosyl-L-methionine contacts are provided by threonine 139, glycine 162, aspartate 184, and asparagine 226. The tract at residues 274 to 297 (EHVATRPDPASPGGDRRAGRGDAG) is disordered.

It belongs to the methyltransferase superfamily. PrmA family.

The protein localises to the cytoplasm. The catalysed reaction is L-lysyl-[protein] + 3 S-adenosyl-L-methionine = N(6),N(6),N(6)-trimethyl-L-lysyl-[protein] + 3 S-adenosyl-L-homocysteine + 3 H(+). In terms of biological role, methylates ribosomal protein L11. This is Ribosomal protein L11 methyltransferase from Sorangium cellulosum (strain So ce56) (Polyangium cellulosum (strain So ce56)).